The primary structure comprises 268 residues: Purine nucleoside phosphorylase (268 aa).

Phosphate-binding positions include Ser-36, His-68, 88-90, and Ala-120; that span reads RIH. Glu-189 is an a purine D-ribonucleoside binding site. Ser-208 contributes to the phosphate binding site. A purine D-ribonucleoside is bound at residue Asn-231.

This sequence belongs to the PNP/MTAP phosphorylase family. Homotrimer.

The catalysed reaction is a purine 2'-deoxy-D-ribonucleoside + phosphate = a purine nucleobase + 2-deoxy-alpha-D-ribose 1-phosphate. The protein operates within purine metabolism; purine nucleoside salvage. Its function is as follows. The purine nucleoside phosphorylases catalyze the phosphorolytic breakdown of the N-glycosidic bond in the beta-(deoxy)ribonucleoside molecules, with the formation of the corresponding free purine bases and pentose-1-phosphate. Cleaves guanosine, inosine, 2'-deoxyguanosine and 2'-deoxyinosine. The polypeptide is Purine nucleoside phosphorylase (punA) (Mycobacterium leprae (strain TN)).